Here is a 122-residue protein sequence, read N- to C-terminus: Large ribosomal subunit protein uL14 (122 aa).

This sequence belongs to the universal ribosomal protein uL14 family. As to quaternary structure, part of the 50S ribosomal subunit. Forms a cluster with proteins L3 and L19. In the 70S ribosome, L14 and L19 interact and together make contacts with the 16S rRNA in bridges B5 and B8.

In terms of biological role, binds to 23S rRNA. Forms part of two intersubunit bridges in the 70S ribosome. This is Large ribosomal subunit protein uL14 from Caulobacter sp. (strain K31).